The primary structure comprises 427 residues: Peptidase B (427 aa).

Mn(2+)-binding residues include Lys-195 and Asp-200. Residue Lys-207 is part of the active site. Positions 218, 277, and 279 each coordinate Mn(2+). Arg-281 is an active-site residue.

The protein belongs to the peptidase M17 family. In terms of assembly, homohexamer. It depends on Mn(2+) as a cofactor.

It is found in the cytoplasm. The catalysed reaction is Release of an N-terminal amino acid, Xaa, from a peptide or arylamide. Xaa is preferably Glu or Asp but may be other amino acids, including Leu, Met, His, Cys and Gln.. Probably plays an important role in intracellular peptide degradation. This Escherichia coli O139:H28 (strain E24377A / ETEC) protein is Peptidase B.